Here is a 120-residue protein sequence, read N- to C-terminus: NAD(P)H-quinone oxidoreductase subunit 3 (120 aa).

3 helical membrane-spanning segments follow: residues 1 to 21 (MFVL…SLVP), 64 to 84 (MFAL…PWAV), and 89 to 109 (LGLL…VALV).

It belongs to the complex I subunit 3 family. In terms of assembly, NDH-1 can be composed of about 15 different subunits; different subcomplexes with different compositions have been identified which probably have different functions.

It localises to the cellular thylakoid membrane. It catalyses the reaction a plastoquinone + NADH + (n+1) H(+)(in) = a plastoquinol + NAD(+) + n H(+)(out). The enzyme catalyses a plastoquinone + NADPH + (n+1) H(+)(in) = a plastoquinol + NADP(+) + n H(+)(out). NDH-1 shuttles electrons from an unknown electron donor, via FMN and iron-sulfur (Fe-S) centers, to quinones in the respiratory and/or the photosynthetic chain. The immediate electron acceptor for the enzyme in this species is believed to be plastoquinone. Couples the redox reaction to proton translocation, and thus conserves the redox energy in a proton gradient. Cyanobacterial NDH-1 also plays a role in inorganic carbon-concentration. This is NAD(P)H-quinone oxidoreductase subunit 3 from Nostoc punctiforme (strain ATCC 29133 / PCC 73102).